The primary structure comprises 378 residues: uncharacterized protein (378 aa).

Over residues 150 to 176 (TTTATTSNNRFNNNNSNNNNINNNNDN) the composition is skewed to low complexity. The disordered stretch occupies residues 150–187 (TTTATTSNNRFNNNNSNNNNINNNNDNNNKEQKKESRC). The span at 177 to 187 (NNKEQKKESRC) shows a compositional bias: basic and acidic residues.

This is an uncharacterized protein from Dictyostelium discoideum (Social amoeba).